The following is a 282-amino-acid chain: 1,4-dihydroxy-6-naphtoate synthase (282 aa).

Substrate is bound by residues 57–59 (KVS) and 109–110 (TA). Residue His-153 is the Proton acceptor of the active site.

It belongs to the MqnA/MqnD family. MqnD subfamily.

The enzyme catalyses cyclic dehypoxanthinylfutalosinate = 1,4-dihydroxy-6-naphthoate + dihydroxyacetone. It functions in the pathway quinol/quinone metabolism; menaquinone biosynthesis. Its function is as follows. Catalyzes the conversion of cyclic dehypoxanthine futalosine (cyclic DHFL) into 1,4-dihydroxy-6-naphthoate, a step in the biosynthesis of menaquinone (MK, vitamin K2). This is 1,4-dihydroxy-6-naphtoate synthase from Streptomyces coelicolor (strain ATCC BAA-471 / A3(2) / M145).